The sequence spans 599 residues: Riboflavin biosynthesis protein PYRR, chloroplastic (599 aa).

The transit peptide at 1–17 (MALSFRISSSSPLICRA) directs the protein to the chloroplast. Positions 30–152 (TTDAAFIRRA…ELRSHGIEVN (123 aa)) constitute a CMP/dCMP-type deaminase domain.

This sequence in the C-terminal section; belongs to the YbiA family.

It localises to the plastid. The protein resides in the chloroplast. The catalysed reaction is 5-amino-6-(5-phospho-D-ribitylamino)uracil + NADP(+) = 5-amino-6-(5-phospho-D-ribosylamino)uracil + NADPH + H(+). It catalyses the reaction 2,5-diamino-6-hydroxy-4-(5-phosphoribosylamino)-pyrimidine + H2O = 2,5,6-triamino-4-hydroxypyrimidine + D-ribose 5-phosphate. It carries out the reaction 5-amino-6-(5-phospho-D-ribosylamino)uracil + H2O = 5,6-diaminouracil + D-ribose 5-phosphate. It participates in cofactor biosynthesis; riboflavin biosynthesis; 5-amino-6-(D-ribitylamino)uracil from GTP: step 3/4. Its function is as follows. Pyrimidine reductase involved in the riboflavin biosynthesis pathway. Also has a non-functional N-terminal deaminase domain that lacks the catalytically essential zinc-binding residues. Catalyzes the hydrolysis of the N-glycosidic bond in the first two intermediates of riboflavin biosynthesis, which are highly reactive metabolites, yielding relatively innocuous products. Thus, can divert a surplus of harmful intermediates into relatively harmless products and pre-empt the damage these intermediates would otherwise do. Helps maintain flavin levels. Has no activity against GTP, nucleoside monophosphates or ADP-ribose. This Arabidopsis thaliana (Mouse-ear cress) protein is Riboflavin biosynthesis protein PYRR, chloroplastic (PYRR).